We begin with the raw amino-acid sequence, 97 residues long: MEITEVRVFPVNEEKLKAYVTITLDDCFVVRDLKVIHGNTGLFIAMPAKRRKDGTFKDIAHPLNTETRERMERTILAEYDRELRKGAAPRPTGTHDD.

It belongs to the SpoVG family.

Its function is as follows. Could be involved in septation. The chain is Putative septation protein SpoVG from Anaeromyxobacter sp. (strain Fw109-5).